A 190-amino-acid polypeptide reads, in one-letter code: Protein GrpE (190 aa).

Disordered regions lie at residues M1–I22 and E170–S190. Residues A181–S190 are compositionally biased toward basic residues.

The protein belongs to the GrpE family. As to quaternary structure, homodimer.

The protein resides in the cytoplasm. Functionally, participates actively in the response to hyperosmotic and heat shock by preventing the aggregation of stress-denatured proteins, in association with DnaK and GrpE. It is the nucleotide exchange factor for DnaK and may function as a thermosensor. Unfolded proteins bind initially to DnaJ; upon interaction with the DnaJ-bound protein, DnaK hydrolyzes its bound ATP, resulting in the formation of a stable complex. GrpE releases ADP from DnaK; ATP binding to DnaK triggers the release of the substrate protein, thus completing the reaction cycle. Several rounds of ATP-dependent interactions between DnaJ, DnaK and GrpE are required for fully efficient folding. This is Protein GrpE from Leptospira biflexa serovar Patoc (strain Patoc 1 / Ames).